The chain runs to 143 residues: Large-conductance mechanosensitive channel (143 aa).

3 helical membrane passes run 21-41 (VGVIIGAAFGKIVDSIVADII), 44-64 (VVGLVFGKLDFSNLYVVLGTV), and 86-106 (GNFITIAVNFVILAFIIFMMV).

It belongs to the MscL family. Homopentamer.

Its subcellular location is the cell inner membrane. In terms of biological role, channel that opens in response to stretch forces in the membrane lipid bilayer. May participate in the regulation of osmotic pressure changes within the cell. This is Large-conductance mechanosensitive channel from Variovorax paradoxus (strain S110).